Here is a 205-residue protein sequence, read N- to C-terminus: Small ribosomal subunit protein uS5 (205 aa).

Residues 49 to 112 (LVDEVLDINM…VSAKINLVKV (64 aa)) enclose the S5 DRBM domain.

It belongs to the universal ribosomal protein uS5 family. As to quaternary structure, part of the 30S ribosomal subunit. Contacts protein S4.

Its function is as follows. With S4 and S12 plays an important role in translational accuracy. In Methanospirillum hungatei JF-1 (strain ATCC 27890 / DSM 864 / NBRC 100397 / JF-1), this protein is Small ribosomal subunit protein uS5.